Here is a 134-residue protein sequence, read N- to C-terminus: Replication enhancer protein (134 aa).

This sequence belongs to the geminiviridae replication enhancer protein family. As to quaternary structure, homooligomer. Interacts with the replication-associated protein (REP). Interacts with host proliferating cell nuclear antigen (PCNA). Interacts with host retinoblastoma-related protein 1 (RBR1), and may thereby deregulate the host cell cycle. Oligomerization and interaction with PCNA are necessary for optimal replication enhancement.

Its function is as follows. Increases viral DNA accumulation. Enhances infectivity and symptom expression. This Tomato pseudo-curly top virus (TPCTV) protein is Replication enhancer protein.